Consider the following 434-residue polypeptide: Histidine--tRNA ligase (434 aa).

This sequence belongs to the class-II aminoacyl-tRNA synthetase family. In terms of assembly, homodimer.

Its subcellular location is the cytoplasm. The catalysed reaction is tRNA(His) + L-histidine + ATP = L-histidyl-tRNA(His) + AMP + diphosphate + H(+). In Chlorobium phaeobacteroides (strain BS1), this protein is Histidine--tRNA ligase.